Consider the following 256-residue polypeptide: Isoprenyl transferase 1 (256 aa).

Residue D34 is part of the active site. Position 34 (D34) interacts with Mg(2+). Substrate-binding positions include 35–38, W39, H52, and 80–82; these read GNRR and STE. N83 (proton acceptor) is an active-site residue. Residues R86, R205, and 211–213 contribute to the substrate site; that span reads RLS. E224 is a binding site for Mg(2+).

Belongs to the UPP synthase family. As to quaternary structure, homodimer. It depends on Mg(2+) as a cofactor.

Its function is as follows. Catalyzes the condensation of isopentenyl diphosphate (IPP) with allylic pyrophosphates generating different type of terpenoids. In Corynebacterium efficiens (strain DSM 44549 / YS-314 / AJ 12310 / JCM 11189 / NBRC 100395), this protein is Isoprenyl transferase 1.